We begin with the raw amino-acid sequence, 215 residues long: NADH-quinone oxidoreductase subunit C (215 aa).

Belongs to the complex I 30 kDa subunit family. As to quaternary structure, NDH-1 is composed of 14 different subunits. Subunits NuoB, C, D, E, F, and G constitute the peripheral sector of the complex.

It is found in the cell inner membrane. It carries out the reaction a quinone + NADH + 5 H(+)(in) = a quinol + NAD(+) + 4 H(+)(out). Its function is as follows. NDH-1 shuttles electrons from NADH, via FMN and iron-sulfur (Fe-S) centers, to quinones in the respiratory chain. The immediate electron acceptor for the enzyme in this species is believed to be ubiquinone. Couples the redox reaction to proton translocation (for every two electrons transferred, four hydrogen ions are translocated across the cytoplasmic membrane), and thus conserves the redox energy in a proton gradient. The protein is NADH-quinone oxidoreductase subunit C of Dinoroseobacter shibae (strain DSM 16493 / NCIMB 14021 / DFL 12).